The following is a 212-amino-acid chain: Phosphoribosyl-dephospho-CoA transferase (212 aa).

Residues aspartate 139 and aspartate 141 contribute to the active site.

It belongs to the MdcG family.

It carries out the reaction apo-[malonate decarboxylase ACP] + 2'-(5''-triphospho-alpha-D-ribosyl)-3'-dephospho-CoA = holo-[malonate decarboxylase ACP] + diphosphate. Transfers 2'-(5-triphosphoribosyl)-3'-dephosphocoenzyme-A to the apo-[acyl-carrier-protein] of the malonate decarboxylase to yield holo-[acyl-carrier-protein]. The chain is Phosphoribosyl-dephospho-CoA transferase from Azotobacter vinelandii (strain DJ / ATCC BAA-1303).